A 185-amino-acid chain; its full sequence is Large ribosomal subunit protein uL22 (185 aa).

The segment at 160–185 is disordered; the sequence is VSHDDSQKKKVSKKKLARQKEKMMRE.

It belongs to the universal ribosomal protein uL22 family.

The sequence is that of Large ribosomal subunit protein uL22 (RpL17) from Maconellicoccus hirsutus (Pink hibiscus mealybug).